Consider the following 542-residue polypeptide: CTP synthase (542 aa).

The tract at residues 1–265 (MARYVFITGG…DNEVLAAFGI (265 aa)) is amidoligase domain. S13 is a binding site for CTP. A UTP-binding site is contributed by S13. ATP-binding positions include 14–19 (SLGKGI) and D71. Positions 71 and 139 each coordinate Mg(2+). CTP is bound by residues 146–148 (DIE), 186–191 (KTKPTQ), and K222. UTP is bound by residues 186-191 (KTKPTQ) and K222. The Glutamine amidotransferase type-1 domain occupies 291 to 541 (TIAIVGKYTG…IEAALEQSRL (251 aa)). L-glutamine is bound at residue G353. C380 acts as the Nucleophile; for glutamine hydrolysis in catalysis. L-glutamine-binding positions include 381–384 (FGMQ), E404, and R469. Catalysis depends on residues H514 and E516.

Belongs to the CTP synthase family. In terms of assembly, homotetramer.

The catalysed reaction is UTP + L-glutamine + ATP + H2O = CTP + L-glutamate + ADP + phosphate + 2 H(+). The enzyme catalyses L-glutamine + H2O = L-glutamate + NH4(+). It catalyses the reaction UTP + NH4(+) + ATP = CTP + ADP + phosphate + 2 H(+). It participates in pyrimidine metabolism; CTP biosynthesis via de novo pathway; CTP from UDP: step 2/2. Its activity is regulated as follows. Allosterically activated by GTP, when glutamine is the substrate; GTP has no effect on the reaction when ammonia is the substrate. The allosteric effector GTP functions by stabilizing the protein conformation that binds the tetrahedral intermediate(s) formed during glutamine hydrolysis. Inhibited by the product CTP, via allosteric rather than competitive inhibition. Functionally, catalyzes the ATP-dependent amination of UTP to CTP with either L-glutamine or ammonia as the source of nitrogen. Regulates intracellular CTP levels through interactions with the four ribonucleotide triphosphates. The protein is CTP synthase of Rhizobium meliloti (strain 1021) (Ensifer meliloti).